The following is a 134-amino-acid chain: Large ribosomal subunit protein uL16c (134 aa).

Belongs to the universal ribosomal protein uL16 family. As to quaternary structure, part of the 50S ribosomal subunit.

The protein resides in the plastid. It localises to the chloroplast. The protein is Large ribosomal subunit protein uL16c of Gnetum parvifolium (Small-leaved jointfir).